A 1492-amino-acid chain; its full sequence is DNA-directed RNA polymerase subunit beta' (1492 aa).

Residues C67, C69, C82, and C85 each coordinate Zn(2+). 3 residues coordinate Mg(2+): D499, D501, and D503. Zn(2+)-binding residues include C867, C943, C950, and C953.

The protein belongs to the RNA polymerase beta' chain family. The RNAP catalytic core consists of 2 alpha, 1 beta, 1 beta' and 1 omega subunit. When a sigma factor is associated with the core the holoenzyme is formed, which can initiate transcription. Mg(2+) serves as cofactor. It depends on Zn(2+) as a cofactor.

It catalyses the reaction RNA(n) + a ribonucleoside 5'-triphosphate = RNA(n+1) + diphosphate. In terms of biological role, DNA-dependent RNA polymerase catalyzes the transcription of DNA into RNA using the four ribonucleoside triphosphates as substrates. This Chlorobium phaeobacteroides (strain DSM 266 / SMG 266 / 2430) protein is DNA-directed RNA polymerase subunit beta'.